A 150-amino-acid chain; its full sequence is C-C motif chemokine 25 (150 aa).

The N-terminal stretch at 1 to 23 is a signal peptide; the sequence is MNLWLLACLVAGFLGAWAPAVHT. Disulfide bonds link Cys-30/Cys-58 and Cys-31/Cys-75.

Belongs to the intercrine beta (chemokine CC) family. As to expression, specifically expressed by thymic dendritic cells. High levels in thymus and small intestine.

It is found in the secreted. Its function is as follows. Potentially involved in T-cell development. Recombinant protein shows chemotactic activity on thymocytes, macrophages, THP-1 cells, and dendritics cells but is inactive on peripheral blood lymphocytes and neutrophils. Binds to CCR9. Isoform 2 is an antagonist of isoform 1. Binds to atypical chemokine receptor ACKR4 and mediates the recruitment of beta-arrestin (ARRB1/2) to ACKR4. This Homo sapiens (Human) protein is C-C motif chemokine 25 (CCL25).